A 228-amino-acid chain; its full sequence is NAD(P)H-quinone oxidoreductase subunit K, chloroplastic (228 aa).

The [4Fe-4S] cluster site is built by Cys43, Cys44, Cys108, and Cys139.

It belongs to the complex I 20 kDa subunit family. NDH is composed of at least 16 different subunits, 5 of which are encoded in the nucleus. It depends on [4Fe-4S] cluster as a cofactor.

It localises to the plastid. It is found in the chloroplast thylakoid membrane. It carries out the reaction a plastoquinone + NADH + (n+1) H(+)(in) = a plastoquinol + NAD(+) + n H(+)(out). It catalyses the reaction a plastoquinone + NADPH + (n+1) H(+)(in) = a plastoquinol + NADP(+) + n H(+)(out). Its function is as follows. NDH shuttles electrons from NAD(P)H:plastoquinone, via FMN and iron-sulfur (Fe-S) centers, to quinones in the photosynthetic chain and possibly in a chloroplast respiratory chain. The immediate electron acceptor for the enzyme in this species is believed to be plastoquinone. Couples the redox reaction to proton translocation, and thus conserves the redox energy in a proton gradient. This is NAD(P)H-quinone oxidoreductase subunit K, chloroplastic from Ceratophyllum demersum (Rigid hornwort).